The chain runs to 248 residues: MTEGARSTIDQGEVNRFSAMAAEWWSPTGKFKPLHKFNPVRLGYIRDKACENFGRDPKSARPLEGLRVLDIGCGGGLLSEPVARMGASVVGADPSEKNIGIASTHAKASGVSVDYRAVTAEELAEAGETFDIVLNMEVVEHVADVELFMTTCAKMVRPGGLIFVATINRTMKAAALAIFAAENILRWLPRGTHQYEKLVRPEELEKPLAASGLEITDRTGVFFNPLSNQWKLSRDMDVNYMLLAKRPA.

The S-adenosyl-L-methionine site is built by Arg-41, Gly-72, Asp-93, and Met-136.

It belongs to the methyltransferase superfamily. UbiG/COQ3 family.

The enzyme catalyses a 3-demethylubiquinol + S-adenosyl-L-methionine = a ubiquinol + S-adenosyl-L-homocysteine + H(+). It carries out the reaction a 3-(all-trans-polyprenyl)benzene-1,2-diol + S-adenosyl-L-methionine = a 2-methoxy-6-(all-trans-polyprenyl)phenol + S-adenosyl-L-homocysteine + H(+). It participates in cofactor biosynthesis; ubiquinone biosynthesis. In terms of biological role, O-methyltransferase that catalyzes the 2 O-methylation steps in the ubiquinone biosynthetic pathway. This Rhizobium etli (strain ATCC 51251 / DSM 11541 / JCM 21823 / NBRC 15573 / CFN 42) protein is Ubiquinone biosynthesis O-methyltransferase.